Here is a 261-residue protein sequence, read N- to C-terminus: 1-(5-phosphoribosyl)-5-[(5-phosphoribosylamino)methylideneamino] imidazole-4-carboxamide isomerase (261 aa).

The Proton acceptor role is filled by Asp15. Catalysis depends on Asp136, which acts as the Proton donor.

The protein belongs to the HisA/HisF family.

It localises to the cytoplasm. It catalyses the reaction 1-(5-phospho-beta-D-ribosyl)-5-[(5-phospho-beta-D-ribosylamino)methylideneamino]imidazole-4-carboxamide = 5-[(5-phospho-1-deoxy-D-ribulos-1-ylimino)methylamino]-1-(5-phospho-beta-D-ribosyl)imidazole-4-carboxamide. It participates in amino-acid biosynthesis; L-histidine biosynthesis; L-histidine from 5-phospho-alpha-D-ribose 1-diphosphate: step 4/9. This is 1-(5-phosphoribosyl)-5-[(5-phosphoribosylamino)methylideneamino] imidazole-4-carboxamide isomerase from Synechococcus sp. (strain JA-3-3Ab) (Cyanobacteria bacterium Yellowstone A-Prime).